A 424-amino-acid chain; its full sequence is Serine--tRNA ligase (424 aa).

231-233 (TAE) contacts L-serine. Residue 262 to 264 (RSE) participates in ATP binding. Glu-285 contacts L-serine. Residue 349–352 (EISS) coordinates ATP. Position 385 (Ser-385) interacts with L-serine.

It belongs to the class-II aminoacyl-tRNA synthetase family. Type-1 seryl-tRNA synthetase subfamily. As to quaternary structure, homodimer. The tRNA molecule binds across the dimer.

It is found in the cytoplasm. It carries out the reaction tRNA(Ser) + L-serine + ATP = L-seryl-tRNA(Ser) + AMP + diphosphate + H(+). The enzyme catalyses tRNA(Sec) + L-serine + ATP = L-seryl-tRNA(Sec) + AMP + diphosphate + H(+). It functions in the pathway aminoacyl-tRNA biosynthesis; selenocysteinyl-tRNA(Sec) biosynthesis; L-seryl-tRNA(Sec) from L-serine and tRNA(Sec): step 1/1. Catalyzes the attachment of serine to tRNA(Ser). Is also able to aminoacylate tRNA(Sec) with serine, to form the misacylated tRNA L-seryl-tRNA(Sec), which will be further converted into selenocysteinyl-tRNA(Sec). The protein is Serine--tRNA ligase of Bacillus cereus (strain G9842).